The following is a 607-amino-acid chain: Discoidin-inducing complex subunit B (607 aa).

The first 19 residues, 1–19, serve as a signal peptide directing secretion; the sequence is MNKKIIILIYLIFIKSIVG. Residues 20-554 lie on the Extracellular side of the membrane; that stretch reads QNPVWIGGSG…LGTDGISKGS (535 aa). N-linked (GlcNAc...) asparagine glycosylation is found at N75, N161, N215, N276, N277, N307, N324, N453, N477, and N527. A helical transmembrane segment spans residues 555-575; that stretch reads LAGISVSMVALACFVSLGVWW. Over 576 to 607 the chain is Cytoplasmic; sequence KTSKKNDQRNDSQVLTNFSQNKSDDIDVERKL.

In terms of assembly, forms a complex with psiF/dicA.

It is found in the membrane. The protein localises to the secreted. Functionally, component of a complex that acts as a quorum sensing protein regulating discoidin gene expression during growth and development. Its function in the complex is unclear as it has no ability to induce discoidin during growth and development by itself. In Dictyostelium discoideum (Social amoeba), this protein is Discoidin-inducing complex subunit B (dicB).